We begin with the raw amino-acid sequence, 220 residues long: Large ribosomal subunit protein uL3 (220 aa).

Residues 127–155 (FQGAIKRHGQSRGPMSHSSHFHRAPDSVG) are disordered.

This sequence belongs to the universal ribosomal protein uL3 family. In terms of assembly, part of the 50S ribosomal subunit. Forms a cluster with proteins L14 and L19.

Functionally, one of the primary rRNA binding proteins, it binds directly near the 3'-end of the 23S rRNA, where it nucleates assembly of the 50S subunit. The chain is Large ribosomal subunit protein uL3 from Staphylococcus aureus (strain JH9).